The sequence spans 309 residues: Small ribosomal subunit protein uS7m (309 aa).

Positions 39 to 86 are disordered; it reads DSTTSSRLPPRVQIQQQQQQRTQPYSTETTPPPNSNNGDLAGIEGQPP. A compositionally biased stretch (low complexity) spans 51–61; that stretch reads QIQQQQQQRTQ.

Belongs to the universal ribosomal protein uS7 family. Component of the mitochondrial small ribosomal subunit (mt-SSU). Mature N.crassa 74S mitochondrial ribosomes consist of a small (37S) and a large (54S) subunit. The 37S small subunit contains a 16S ribosomal RNA (16S mt-rRNA) and 32 different proteins. The 54S large subunit contains a 23S rRNA (23S mt-rRNA) and 42 different proteins.

The protein localises to the mitochondrion. Its function is as follows. Component of the mitochondrial ribosome (mitoribosome), a dedicated translation machinery responsible for the synthesis of mitochondrial genome-encoded proteins, including at least some of the essential transmembrane subunits of the mitochondrial respiratory chain. The mitoribosomes are attached to the mitochondrial inner membrane and translation products are cotranslationally integrated into the membrane. The polypeptide is Small ribosomal subunit protein uS7m (rsm7) (Neurospora crassa (strain ATCC 24698 / 74-OR23-1A / CBS 708.71 / DSM 1257 / FGSC 987)).